Here is an 82-residue protein sequence, read N- to C-terminus: Myosin light chain alkali (82 aa).

One can recognise an EF-hand domain in the interval 7 to 42 (GCYEDFIECLKLYDKEENGTMLLAELQHALLALGEN).

As to quaternary structure, myosin is a hexamer of 2 heavy chains and 4 light chains.

The chain is Myosin light chain alkali (Mlc1) from Drosophila teissieri (Fruit fly).